Reading from the N-terminus, the 151-residue chain is Methylated-DNA--protein-cysteine methyltransferase (151 aa).

Residue C119 is the Nucleophile; methyl group acceptor of the active site.

It belongs to the MGMT family.

It localises to the cytoplasm. It catalyses the reaction a 6-O-methyl-2'-deoxyguanosine in DNA + L-cysteinyl-[protein] = S-methyl-L-cysteinyl-[protein] + a 2'-deoxyguanosine in DNA. It carries out the reaction a 4-O-methyl-thymidine in DNA + L-cysteinyl-[protein] = a thymidine in DNA + S-methyl-L-cysteinyl-[protein]. In terms of biological role, involved in the cellular defense against the biological effects of O6-methylguanine (O6-MeG) and O4-methylthymine (O4-MeT) in DNA. Repairs the methylated nucleobase in DNA by stoichiometrically transferring the methyl group to a cysteine residue in the enzyme. This is a suicide reaction: the enzyme is irreversibly inactivated. This Saccharolobus islandicus (strain L.S.2.15 / Lassen #1) (Sulfolobus islandicus) protein is Methylated-DNA--protein-cysteine methyltransferase.